The primary structure comprises 145 residues: D-aminoacyl-tRNA deacylase (145 aa).

The Gly-cisPro motif, important for rejection of L-amino acids signature appears at 137-138 (GP).

Belongs to the DTD family. As to quaternary structure, homodimer.

The protein resides in the cytoplasm. The catalysed reaction is glycyl-tRNA(Ala) + H2O = tRNA(Ala) + glycine + H(+). The enzyme catalyses a D-aminoacyl-tRNA + H2O = a tRNA + a D-alpha-amino acid + H(+). Functionally, an aminoacyl-tRNA editing enzyme that deacylates mischarged D-aminoacyl-tRNAs. Also deacylates mischarged glycyl-tRNA(Ala), protecting cells against glycine mischarging by AlaRS. Acts via tRNA-based rather than protein-based catalysis; rejects L-amino acids rather than detecting D-amino acids in the active site. By recycling D-aminoacyl-tRNA to D-amino acids and free tRNA molecules, this enzyme counteracts the toxicity associated with the formation of D-aminoacyl-tRNA entities in vivo and helps enforce protein L-homochirality. This Shewanella denitrificans (strain OS217 / ATCC BAA-1090 / DSM 15013) protein is D-aminoacyl-tRNA deacylase.